Consider the following 283-residue polypeptide: 4-diphosphocytidyl-2-C-methyl-D-erythritol kinase (283 aa).

Lys13 is an active-site residue. An ATP-binding site is contributed by 96–106 (PMGGGIGGGSS). The active site involves Asp138.

Belongs to the GHMP kinase family. IspE subfamily.

The enzyme catalyses 4-CDP-2-C-methyl-D-erythritol + ATP = 4-CDP-2-C-methyl-D-erythritol 2-phosphate + ADP + H(+). It functions in the pathway isoprenoid biosynthesis; isopentenyl diphosphate biosynthesis via DXP pathway; isopentenyl diphosphate from 1-deoxy-D-xylulose 5-phosphate: step 3/6. Catalyzes the phosphorylation of the position 2 hydroxy group of 4-diphosphocytidyl-2C-methyl-D-erythritol. The polypeptide is 4-diphosphocytidyl-2-C-methyl-D-erythritol kinase (Pseudomonas fluorescens (strain Pf0-1)).